The sequence spans 545 residues: CTP synthase (545 aa).

An amidoligase domain region spans residues 1–266 (MTTRYIFVTG…DDLVTKRFGL (266 aa)). Ser14 provides a ligand contact to CTP. Ser14 is a binding site for UTP. ATP is bound by residues 15–20 (SLGKGI) and Asp72. 2 residues coordinate Mg(2+): Asp72 and Glu140. Residues 147–149 (DIE), 187–192 (KTKPTQ), and Lys223 contribute to the CTP site. Residues 187-192 (KTKPTQ) and Lys223 each bind UTP. An ATP-binding site is contributed by 239 to 241 (KDV). One can recognise a Glutamine amidotransferase type-1 domain in the interval 291–542 (TIGMVGKYTE…VAAAVAYQKR (252 aa)). Gly352 provides a ligand contact to L-glutamine. Cys379 serves as the catalytic Nucleophile; for glutamine hydrolysis. L-glutamine-binding positions include 380–383 (LGMQ), Glu403, and Arg470. Catalysis depends on residues His515 and Glu517.

The protein belongs to the CTP synthase family. As to quaternary structure, homotetramer.

The catalysed reaction is UTP + L-glutamine + ATP + H2O = CTP + L-glutamate + ADP + phosphate + 2 H(+). The enzyme catalyses L-glutamine + H2O = L-glutamate + NH4(+). It carries out the reaction UTP + NH4(+) + ATP = CTP + ADP + phosphate + 2 H(+). The protein operates within pyrimidine metabolism; CTP biosynthesis via de novo pathway; CTP from UDP: step 2/2. With respect to regulation, allosterically activated by GTP, when glutamine is the substrate; GTP has no effect on the reaction when ammonia is the substrate. The allosteric effector GTP functions by stabilizing the protein conformation that binds the tetrahedral intermediate(s) formed during glutamine hydrolysis. Inhibited by the product CTP, via allosteric rather than competitive inhibition. Catalyzes the ATP-dependent amination of UTP to CTP with either L-glutamine or ammonia as the source of nitrogen. Regulates intracellular CTP levels through interactions with the four ribonucleotide triphosphates. The sequence is that of CTP synthase from Shewanella loihica (strain ATCC BAA-1088 / PV-4).